Reading from the N-terminus, the 428-residue chain is Tryptophan synthase beta chain (428 aa).

At K100 the chain carries N6-(pyridoxal phosphate)lysine.

This sequence belongs to the TrpB family. Tetramer of two alpha and two beta chains. The cofactor is pyridoxal 5'-phosphate.

The catalysed reaction is (1S,2R)-1-C-(indol-3-yl)glycerol 3-phosphate + L-serine = D-glyceraldehyde 3-phosphate + L-tryptophan + H2O. Its pathway is amino-acid biosynthesis; L-tryptophan biosynthesis; L-tryptophan from chorismate: step 5/5. In terms of biological role, the beta subunit is responsible for the synthesis of L-tryptophan from indole and L-serine. This is Tryptophan synthase beta chain from Streptomyces griseus subsp. griseus (strain JCM 4626 / CBS 651.72 / NBRC 13350 / KCC S-0626 / ISP 5235).